We begin with the raw amino-acid sequence, 349 residues long: Desmethyl-yatein O-methyltransferase (349 aa).

S-adenosyl-L-homocysteine contacts are provided by glycine 193, aspartate 216, aspartate 236, methionine 237, methionine 249, and lysine 250. The active-site Proton acceptor is histidine 254. Active-site residues include glutamate 282 and glutamate 314.

This sequence belongs to the class I-like SAM-binding methyltransferase superfamily. Cation-independent O-methyltransferase family. COMT subfamily. In terms of assembly, homodimer. As to expression, mostly expressed in stems, and, to a lower extent, in leaves.

The enzyme catalyses (-)-5'-demethylyatein + S-adenosyl-L-methionine = (-)-yatein + S-adenosyl-L-homocysteine + H(+). Its pathway is aromatic compound metabolism; phenylpropanoid biosynthesis. Its function is as follows. O-methyltransferase involved in the biosynthesis of etoposide, a chemotherapeutic compound of the topoisomerase inhibitor family. Catalyzes the methylation of (-)-5'-demethylyatein to produce (-)-yatein. The polypeptide is Desmethyl-yatein O-methyltransferase (Sinopodophyllum hexandrum (Himalayan may apple)).